Here is a 133-residue protein sequence, read N- to C-terminus: uncharacterized protein (133 aa).

An HIT domain is found at 3 to 106 (IFTKIINREL…PTRSLSDFGF (104 aa)). A Histidine triad motif motif is present at residues 90–94 (HLHIH).

This is an uncharacterized protein from Mycobacterium tuberculosis (strain ATCC 25618 / H37Rv).